We begin with the raw amino-acid sequence, 173 residues long: Large ribosomal subunit protein uL10 (173 aa).

Belongs to the universal ribosomal protein uL10 family. Part of the ribosomal stalk of the 50S ribosomal subunit. The N-terminus interacts with L11 and the large rRNA to form the base of the stalk. The C-terminus forms an elongated spine to which L12 dimers bind in a sequential fashion forming a multimeric L10(L12)X complex.

Functionally, forms part of the ribosomal stalk, playing a central role in the interaction of the ribosome with GTP-bound translation factors. This is Large ribosomal subunit protein uL10 from Chloroherpeton thalassium (strain ATCC 35110 / GB-78).